The following is a 156-amino-acid chain: ATP synthase subunit b (156 aa).

A helical transmembrane segment spans residues leucine 7 to proline 27.

This sequence belongs to the ATPase B chain family. F-type ATPases have 2 components, F(1) - the catalytic core - and F(0) - the membrane proton channel. F(1) has five subunits: alpha(3), beta(3), gamma(1), delta(1), epsilon(1). F(0) has three main subunits: a(1), b(2) and c(10-14). The alpha and beta chains form an alternating ring which encloses part of the gamma chain. F(1) is attached to F(0) by a central stalk formed by the gamma and epsilon chains, while a peripheral stalk is formed by the delta and b chains.

The protein resides in the cell inner membrane. F(1)F(0) ATP synthase produces ATP from ADP in the presence of a proton or sodium gradient. F-type ATPases consist of two structural domains, F(1) containing the extramembraneous catalytic core and F(0) containing the membrane proton channel, linked together by a central stalk and a peripheral stalk. During catalysis, ATP synthesis in the catalytic domain of F(1) is coupled via a rotary mechanism of the central stalk subunits to proton translocation. In terms of biological role, component of the F(0) channel, it forms part of the peripheral stalk, linking F(1) to F(0). This is ATP synthase subunit b from Polaromonas naphthalenivorans (strain CJ2).